The primary structure comprises 61 residues: Small ribosomal subunit protein uS14 (61 aa).

Zn(2+) contacts are provided by Cys-24, Cys-27, Cys-40, and Cys-43.

The protein belongs to the universal ribosomal protein uS14 family. Zinc-binding uS14 subfamily. Part of the 30S ribosomal subunit. Contacts proteins S3 and S10. Zn(2+) is required as a cofactor.

Functionally, binds 16S rRNA, required for the assembly of 30S particles and may also be responsible for determining the conformation of the 16S rRNA at the A site. The polypeptide is Small ribosomal subunit protein uS14 (Finegoldia magna (strain ATCC 29328 / DSM 20472 / WAL 2508) (Peptostreptococcus magnus)).